The primary structure comprises 550 residues: ATP synthase subunit alpha (550 aa).

Residue 172–179 participates in ATP binding; the sequence is GDRKTGKT. The disordered stretch occupies residues 521 to 550; the sequence is EPAAEPLAGEEDRETVTRFHDDATDRPAGS. Over residues 534 to 550 the composition is skewed to basic and acidic residues; it reads ETVTRFHDDATDRPAGS.

Belongs to the ATPase alpha/beta chains family. F-type ATPases have 2 components, CF(1) - the catalytic core - and CF(0) - the membrane proton channel. CF(1) has five subunits: alpha(3), beta(3), gamma(1), delta(1), epsilon(1). CF(0) has three main subunits: a(1), b(2) and c(9-12). The alpha and beta chains form an alternating ring which encloses part of the gamma chain. CF(1) is attached to CF(0) by a central stalk formed by the gamma and epsilon chains, while a peripheral stalk is formed by the delta and b chains.

It is found in the cell membrane. It carries out the reaction ATP + H2O + 4 H(+)(in) = ADP + phosphate + 5 H(+)(out). Produces ATP from ADP in the presence of a proton gradient across the membrane. The alpha chain is a regulatory subunit. The sequence is that of ATP synthase subunit alpha from Salinispora tropica (strain ATCC BAA-916 / DSM 44818 / JCM 13857 / NBRC 105044 / CNB-440).